Here is a 152-residue protein sequence, read N- to C-terminus: Toxin Res (152 aa).

This sequence belongs to the MbcT/ParT/Res family. As to quaternary structure, homodimer. Forms a complex with cognate antitoxin Xre.

Toxic component of a type II toxin-antitoxin (TA) system. Expression in E.coli inhibits cell growth; bacteriostasis is neutralized by expression of cognate antitoxin Xre. Probably depletes intracellular NAD(+). The polypeptide is Toxin Res (Yersinia enterocolitica serotype O:8 / biotype 1B (strain NCTC 13174 / 8081)).